The following is a 338-amino-acid chain: Ketol-acid reductoisomerase (NADP(+)) (338 aa).

The 181-residue stretch at 1-181 folds into the KARI N-terminal Rossmann domain; that stretch reads MQVYYDKDCD…GGGRSGIIET (181 aa). NADP(+) contacts are provided by residues 24-27, Arg-47, Ser-50, Ser-52, and 82-85; these read YGSQ and DEFQ. The active site involves His-107. An NADP(+)-binding site is contributed by Gly-133. Residues 182-327 enclose the KARI C-terminal knotted domain; the sequence is TFKDETETDL…GKLRAMMPWI (146 aa). Mg(2+)-binding residues include Asp-190, Glu-194, Glu-226, and Glu-230. Ser-251 is a binding site for substrate.

This sequence belongs to the ketol-acid reductoisomerase family. Requires Mg(2+) as cofactor.

The enzyme catalyses (2R)-2,3-dihydroxy-3-methylbutanoate + NADP(+) = (2S)-2-acetolactate + NADPH + H(+). It catalyses the reaction (2R,3R)-2,3-dihydroxy-3-methylpentanoate + NADP(+) = (S)-2-ethyl-2-hydroxy-3-oxobutanoate + NADPH + H(+). Its pathway is amino-acid biosynthesis; L-isoleucine biosynthesis; L-isoleucine from 2-oxobutanoate: step 2/4. The protein operates within amino-acid biosynthesis; L-valine biosynthesis; L-valine from pyruvate: step 2/4. Its function is as follows. Involved in the biosynthesis of branched-chain amino acids (BCAA). Catalyzes an alkyl-migration followed by a ketol-acid reduction of (S)-2-acetolactate (S2AL) to yield (R)-2,3-dihydroxy-isovalerate. In the isomerase reaction, S2AL is rearranged via a Mg-dependent methyl migration to produce 3-hydroxy-3-methyl-2-ketobutyrate (HMKB). In the reductase reaction, this 2-ketoacid undergoes a metal-dependent reduction by NADPH to yield (R)-2,3-dihydroxy-isovalerate. The polypeptide is Ketol-acid reductoisomerase (NADP(+)) (Saccharophagus degradans (strain 2-40 / ATCC 43961 / DSM 17024)).